The chain runs to 62 residues: Prokaryotic ubiquitin-like protein Pup (62 aa).

Residues 1-36 (MEKSSQIHGSKPGDDNADEPENAAGQSQIRKQGADD) are disordered. The tract at residues 18 to 56 (DEPENAAGQSQIRKQGADDLLDEIDGLLESNAEEFVRSY) is ARC ATPase binding. Residue Gln62 is modified to Deamidated glutamine. Residue Gln62 forms an Isoglutamyl lysine isopeptide (Gln-Lys) (interchain with K-? in acceptor proteins) linkage.

Belongs to the prokaryotic ubiquitin-like protein family. In terms of assembly, strongly interacts with the proteasome-associated ATPase ARC through a hydrophobic interface; the interacting region of Pup lies in its C-terminal half. There is one Pup binding site per ARC hexamer ring. Post-translationally, is modified by deamidation of its C-terminal glutamine to glutamate by the deamidase Dop, a prerequisite to the subsequent pupylation process.

The protein operates within protein degradation; proteasomal Pup-dependent pathway. Functionally, protein modifier that is covalently attached to lysine residues of substrate proteins, thereby targeting them for proteasomal degradation. The tagging system is termed pupylation. In Corynebacterium kroppenstedtii (strain DSM 44385 / JCM 11950 / CIP 105744 / CCUG 35717), this protein is Prokaryotic ubiquitin-like protein Pup.